We begin with the raw amino-acid sequence, 469 residues long: Tryptophan biosynthesis protein TrpCF (469 aa).

The segment at 1-257 is indole-3-glycerol phosphate synthase; it reads MNSILKEIIN…EAVCKMILGN (257 aa). An N-(5'-phosphoribosyl)anthranilate isomerase region spans residues 258–469; the sequence is NKICGLTQSS…YRNLICLGKK (212 aa).

It in the N-terminal section; belongs to the TrpC family. In the C-terminal section; belongs to the TrpF family. As to quaternary structure, monomer.

The enzyme catalyses N-(5-phospho-beta-D-ribosyl)anthranilate = 1-(2-carboxyphenylamino)-1-deoxy-D-ribulose 5-phosphate. The catalysed reaction is 1-(2-carboxyphenylamino)-1-deoxy-D-ribulose 5-phosphate + H(+) = (1S,2R)-1-C-(indol-3-yl)glycerol 3-phosphate + CO2 + H2O. It participates in amino-acid biosynthesis; L-tryptophan biosynthesis; L-tryptophan from chorismate: step 3/5. It functions in the pathway amino-acid biosynthesis; L-tryptophan biosynthesis; L-tryptophan from chorismate: step 4/5. In terms of biological role, bifunctional enzyme that catalyzes two sequential steps of tryptophan biosynthetic pathway. The first reaction is catalyzed by the isomerase, coded by the TrpF domain; the second reaction is catalyzed by the synthase, coded by the TrpC domain. This Buchnera aphidicola subsp. Baizongia pistaciae (strain Bp) protein is Tryptophan biosynthesis protein TrpCF (trpC).